Here is a 291-residue protein sequence, read N- to C-terminus: ATP synthase gamma chain (291 aa).

This sequence belongs to the ATPase gamma chain family. In terms of assembly, F-type ATPases have 2 components, CF(1) - the catalytic core - and CF(0) - the membrane proton channel. CF(1) has five subunits: alpha(3), beta(3), gamma(1), delta(1), epsilon(1). CF(0) has three main subunits: a, b and c.

It localises to the cell inner membrane. Functionally, produces ATP from ADP in the presence of a proton gradient across the membrane. The gamma chain is believed to be important in regulating ATPase activity and the flow of protons through the CF(0) complex. This Neisseria gonorrhoeae (strain ATCC 700825 / FA 1090) protein is ATP synthase gamma chain.